A 136-amino-acid chain; its full sequence is MKSTISLLLVVICTVVLAAQQSQAKKGCQAYGHVCYGGHGKRSLSPGSGSGTGVGGGMGEAASGGQEPDYVRPNGLLPMMAPNEQVPLEGDFNDYPARQVLYKIMKSWFNRPRRPASRLGELDYPLANSAELNGVN.

A signal peptide spans 1–24; it reads MKSTISLLLVVICTVVLAAQQSQA. A disulfide bridge links Cys-28 with Cys-35. Residue His-39 is modified to Histidine amide. The tract at residues 42-78 is disordered; it reads RSLSPGSGSGTGVGGGMGEAASGGQEPDYVRPNGLLP. Residues 43–136 constitute a propeptide that is removed on maturation; it reads SLSPGSGSGT…ANSAELNGVN (94 aa). Gly residues predominate over residues 48–59; it reads SGSGTGVGGGMG.

As to expression, expressed in endocrine cells of the larval midgut (at protein level). Also expressed in endocrine cells of the midgut of adult males and females (at protein level). In the midgut, expression occurs mainly in the anterior region (at protein level). In the larval central nervous system, expressed in about 40 neurons in the brain hemispheres and ventral nerve cord (at protein level). Highly expressed in larval and adult gut with low levels in larval and adult brain. Very little expression in the larval fat body. However, another study shows high levels of expression in the larval fat body as well as the larval gut with low levels in the larval central nervous system.

It localises to the secreted. Functionally, ligand for the CCHamide-2 receptor CCHa2-R. In one study, shown to be an orexigenic peptide which induces appetite and stimulates food intake, leading to the release of insulin-like peptides which stimulate growth. In another study, shown to be a nutrient-sensitive peptide derived from peripheral tissues which controls growth by directly regulating the production and release of insulin-like peptides. This chain is Neuropeptide CCHamide-2, found in Drosophila melanogaster (Fruit fly).